Here is a 1683-residue protein sequence, read N- to C-terminus: Genome polyprotein (1683 aa).

At 1–445 (MRCIGISNRD…LHQVFGAIYG (445 aa)) the chain is on the extracellular side. 4 disulfide bridges follow: cysteine 3/cysteine 30, cysteine 60/cysteine 121, cysteine 74/cysteine 105, and cysteine 92/cysteine 116. Residue asparagine 67 is glycosylated (N-linked (GlcNAc...) asparagine; by host). The tract at residues 98–111 (DRGWGNGCGLFGKG) is fusion peptide. An N-linked (GlcNAc...) asparagine; by host glycan is attached at asparagine 153. 2 disulfide bridges follow: cysteine 185-cysteine 285 and cysteine 302-cysteine 333. A helical membrane pass occupies residues 446–466 (AAFSGVSWTMKILIGVIITWI). The Cytoplasmic portion of the chain corresponds to 467 to 472 (GMNSRS). A helical transmembrane segment spans residues 473–493 (TSLSVSLVLVGIVTLYLGVMV). The Extracellular portion of the chain corresponds to 494 to 915 (QADSGCVVSW…MVGATMTDDI (422 aa)). Intrachain disulfides connect cysteine 499-cysteine 510, cysteine 550-cysteine 638, cysteine 674-cysteine 718, cysteine 775-cysteine 824, cysteine 786-cysteine 808, and cysteine 807-cysteine 811. Asparagine 702 carries N-linked (GlcNAc...) asparagine; by host glycosylation. A helical transmembrane segment spans residues 916-940 (GMGVTYLALLAAFRVRPTFAAGLLL). At 941–946 (RKLTSK) the chain is on the cytoplasmic side. A helical membrane pass occupies residues 947–965 (ELMMTTIGIVLLSQSSIPE). Topologically, residues 966–989 (TILELTDALALGMMVLKMVRNMEK) are lumenal. The chain crosses the membrane as a helical span at residues 990-1010 (YQLAVTIMAILCVPNAVILQN). Alanine 1011 is a topological domain (cytoplasmic). Residues 1012-1030 (WKVSCTILAVVSVSPLLLT) traverse the membrane as a helical segment. Residues 1031 to 1037 (SSQQKAD) are Lumenal-facing. Residues 1038–1058 (WIPLALTIKGLNPTAIFLTTL) traverse the membrane as a helical segment. Residues 1059–1683 (SRTSKKRAGV…EFKEFAAGRK (625 aa)) lie on the Cytoplasmic side of the membrane. Residues 1066 to 1243 (AGVLWDVPSP…EKSIEDNPEI (178 aa)) enclose the Peptidase S7 domain. Active-site charge relay system; for serine protease NS3 activity residues include histidine 1116, aspartate 1140, and serine 1200. The 157-residue stretch at 1245–1401 (DDIFRKRRLT…QSNAPIMDEE (157 aa)) folds into the Helicase ATP-binding domain. The interval 1249 to 1252 (RKRR) is important for RNA-binding. 1258 to 1265 (LHPGAGKT) is a binding site for ATP. The short motif at 1349 to 1352 (DEAH) is the DEAH box element. In terms of domain architecture, Helicase C-terminal spans 1411-1582 (SGHEWVTDFK…IFEPEREKVD (172 aa)).

Capsid protein C: Homodimer. Interacts (via N-terminus) with host EXOC1 (via C-terminus); this interaction results in EXOC1 degradation through the proteasome degradation pathway. Protein prM: Forms heterodimers with envelope protein E in the endoplasmic reticulum and Golgi. As to quaternary structure, homodimer; in the endoplasmic reticulum and Golgi. Interacts with protein prM. Interacts with non-structural protein 1. In terms of assembly, homodimer; Homohexamer when secreted. Interacts with envelope protein E. Interacts (via N-terminus) with serine protease NS3. Non-structural protein 2B: Forms a heterodimer with serine protease NS3. May form homooligomers. As to quaternary structure, forms a heterodimer with NS2B. Interacts with NS4B. Interacts with unphosphorylated RNA-directed RNA polymerase NS5; this interaction stimulates RNA-directed RNA polymerase NS5 guanylyltransferase activity. Interacts with host SHFL. Post-translationally, specific enzymatic cleavages in vivo yield mature proteins. Cleavages in the lumen of endoplasmic reticulum are performed by host signal peptidase, wereas cleavages in the cytoplasmic side are performed by the Serine protease NS3. Signal cleavage at the 2K-4B site requires a prior NS3 protease-mediated cleavage at the 4A-2K site. In terms of processing, N-glycosylated. The excreted form is glycosylated and this is required for efficient secretion of the protein from infected cells. N-glycosylated. Post-translationally, specific enzymatic cleavages in vivo yield mature proteins. Cleavages in the lumen of endoplasmic reticulum are performed by host signal peptidase, wereas cleavages in the cytoplasmic side are performed by serine protease NS3. Signal cleavage at the 2K-4B site requires a prior NS3 protease-mediated cleavage at the 4A-2K site.

The protein localises to the virion membrane. It localises to the host endoplasmic reticulum membrane. The protein resides in the secreted. The catalysed reaction is Selective hydrolysis of -Xaa-Xaa-|-Yaa- bonds in which each of the Xaa can be either Arg or Lys and Yaa can be either Ser or Ala.. The enzyme catalyses a ribonucleoside 5'-triphosphate + H2O = a ribonucleoside 5'-diphosphate + phosphate + H(+). It carries out the reaction ATP + H2O = ADP + phosphate + H(+). Functionally, binds to host cell surface receptor and mediates fusion between viral and cellular membranes. Envelope protein is synthesized in the endoplasmic reticulum in the form of heterodimer with protein prM. They play a role in virion budding in the ER, and the newly formed immature particle is covered with 60 spikes composed of heterodimer between precursor prM and envelope protein E. The virion is transported to the Golgi apparatus where the low pH causes dissociation of PrM-E heterodimers and formation of E homodimers. prM-E cleavage is inefficient, and many virions are only partially matured. These uncleaved prM would play a role in immune evasion. Involved in immune evasion, pathogenesis and viral replication. Once cleaved off the polyprotein, is targeted to three destinations: the viral replication cycle, the plasma membrane and the extracellular compartment. Essential for viral replication. Required for formation of the replication complex and recruitment of other non-structural proteins to the ER-derived membrane structures. Excreted as a hexameric lipoparticle that plays a role against host immune response. Antagonizing the complement function. Binds to the host macrophages and dendritic cells. Inhibits signal transduction originating from Toll-like receptor 3 (TLR3). Its function is as follows. Disrupts the host endothelial glycocalyx layer of host pulmonary microvascular endothelial cells, inducing degradation of sialic acid and shedding of heparan sulfate proteoglycans. NS1 induces expression of sialidases, heparanase, and activates cathepsin L, which activates heparanase via enzymatic cleavage. These effects are probably linked to the endothelial hyperpermeability observed in severe dengue disease. In terms of biological role, component of the viral RNA replication complex that functions in virion assembly and antagonizes the host immune response. Functionally, serine protease subunit NS2B: Required cofactor for the serine protease function of NS3. May have membrane-destabilizing activity and form viroporins. Displays three enzymatic activities: serine protease, NTPase and RNA helicase. NS3 serine protease, in association with NS2B, performs its autocleavage and cleaves the polyprotein at dibasic sites in the cytoplasm: C-prM, NS2A-NS2B, NS2B-NS3, NS3-NS4A, NS4A-2K and NS4B-NS5. NS3 RNA helicase binds RNA and unwinds dsRNA in the 3' to 5' direction. The polypeptide is Genome polyprotein (Aedimorphus (Red guenon)).